A 174-amino-acid chain; its full sequence is NADH-quinone oxidoreductase subunit B (174 aa).

Residues cysteine 53, cysteine 54, cysteine 118, and cysteine 148 each contribute to the [4Fe-4S] cluster site.

This sequence belongs to the complex I 20 kDa subunit family. NDH-1 is composed of 14 different subunits. Subunits NuoB, C, D, E, F, and G constitute the peripheral sector of the complex. [4Fe-4S] cluster serves as cofactor.

Its subcellular location is the cell inner membrane. The enzyme catalyses a quinone + NADH + 5 H(+)(in) = a quinol + NAD(+) + 4 H(+)(out). Its function is as follows. NDH-1 shuttles electrons from NADH, via FMN and iron-sulfur (Fe-S) centers, to quinones in the respiratory chain. Couples the redox reaction to proton translocation (for every two electrons transferred, four hydrogen ions are translocated across the cytoplasmic membrane), and thus conserves the redox energy in a proton gradient. This Ruegeria sp. (strain TM1040) (Silicibacter sp.) protein is NADH-quinone oxidoreductase subunit B.